The primary structure comprises 222 residues: Protein-L-isoaspartate O-methyltransferase (222 aa).

Ser-65 is a catalytic residue.

It belongs to the methyltransferase superfamily. L-isoaspartyl/D-aspartyl protein methyltransferase family.

It is found in the cytoplasm. The enzyme catalyses [protein]-L-isoaspartate + S-adenosyl-L-methionine = [protein]-L-isoaspartate alpha-methyl ester + S-adenosyl-L-homocysteine. Catalyzes the methyl esterification of L-isoaspartyl residues in peptides and proteins that result from spontaneous decomposition of normal L-aspartyl and L-asparaginyl residues. It plays a role in the repair and/or degradation of damaged proteins. The protein is Protein-L-isoaspartate O-methyltransferase of Chlorobium luteolum (strain DSM 273 / BCRC 81028 / 2530) (Pelodictyon luteolum).